We begin with the raw amino-acid sequence, 617 residues long: Acetolactate synthase large subunit (617 aa).

Thiamine diphosphate is bound at residue Glu71. FAD is bound by residues Arg173, 281 to 302 (HGTA…VGAR), and 324 to 343 (EIDP…VLGD). Residues 413 to 492 (QHQMWAAQHL…VKVVIVNNHW (80 aa)) are thiamine pyrophosphate binding. The Mg(2+) site is built by Asp463 and Asn490.

Belongs to the TPP enzyme family. In terms of assembly, dimer of large and small chains. Mg(2+) serves as cofactor. Thiamine diphosphate is required as a cofactor.

The catalysed reaction is 2 pyruvate + H(+) = (2S)-2-acetolactate + CO2. It participates in amino-acid biosynthesis; L-isoleucine biosynthesis; L-isoleucine from 2-oxobutanoate: step 1/4. The protein operates within amino-acid biosynthesis; L-valine biosynthesis; L-valine from pyruvate: step 1/4. This chain is Acetolactate synthase large subunit (ilvB), found in Parasynechococcus marenigrum (strain WH8102).